We begin with the raw amino-acid sequence, 534 residues long: Lariat debranching enzyme (534 aa).

The a divalent metal cation site is built by Cys-8, His-10, Asp-39, and Asn-84. Residues 124-154 form a lariat recognition loop region; sequence SGIFKGHDFLRGHHEFPPYTDSTCRSVYHVR. A divalent metal cation contacts are provided by His-174, His-226, and His-228. Disordered stretches follow at residues 242–275 and 501–534; these read KLGD…PPPS and TETP…AQED.

It belongs to the lariat debranching enzyme family. The cofactor is Fe(2+). Zn(2+) serves as cofactor. Requires Mn(2+) as cofactor.

Its subcellular location is the nucleus. Active in presence of diverse metals including Fe(2+), Zn(2+), Mn(2+). Binds two metal cations in two adjacent alpha and beta metal-binding pockets. Cleaves the 2'-5' phosphodiester linkage at the branch point of lariat intron pre-mRNAs after splicing and converts them into linear molecules that are subsequently degraded. It thereby facilitates ribonucleotide turnover. The sequence is that of Lariat debranching enzyme (ldbr) from Drosophila melanogaster (Fruit fly).